Reading from the N-terminus, the 99-residue chain is Ubiquitin-related modifier 1 (99 aa).

Residue G99 is modified to 1-thioglycine. A Glycyl lysine isopeptide (Gly-Lys) (interchain with K-? in acceptor proteins) cross-link involves residue G99.

This sequence belongs to the URM1 family. As to quaternary structure, homodimer; homodimerization may provide an autoprotection to the highly active C-terminal residue before attacking its substrates. Interacts with NCS2 and NCS6. Forms a conjugate with the target protein AHP1. Post-translationally, C-terminal thiocarboxylation occurs in 2 steps, it is first acyl-adenylated (-COAMP) via the hesA/moeB/thiF part of UBA4, then thiocarboxylated (-COSH) via the rhodanese domain of UBA4.

The protein resides in the cytoplasm. Its subcellular location is the nucleus. The protein operates within tRNA modification; 5-methoxycarbonylmethyl-2-thiouridine-tRNA biosynthesis. Its function is as follows. Acts as a sulfur carrier required for 2-thiolation of mcm(5)S(2)U at tRNA wobble positions of cytosolic tRNA(Lys), tRNA(Glu) and tRNA(Gln). Serves as sulfur donor in tRNA 2-thiolation reaction by being thiocarboxylated (-COSH) at its C-terminus by the MOCS3 homolog UBA4. The sulfur is then transferred to tRNA to form 2-thiolation of mcm(5)S(2)U. Prior mcm(5) tRNA modification by the elongator complex is required for 2-thiolation. Also acts as a ubiquitin-like protein (UBL) that is covalently conjugated via an isopeptide bond to lysine residues of target proteins such as AHP1. The thiocarboxylated form serves as substrate for conjugation and oxidative stress specifically induces the formation of UBL-protein conjugates. This is Ubiquitin-related modifier 1 from Saccharomyces cerevisiae (strain RM11-1a) (Baker's yeast).